Here is a 251-residue protein sequence, read N- to C-terminus: Tungstate/molybdate/chromate-binding protein ModA (251 aa).

Residues 1–23 form the signal peptide; the sequence is MTTRLPQLLLALLASAVSLAASA. Molybdate is bound by residues Thr-60 and Ile-168.

It belongs to the bacterial solute-binding protein ModA family. The complex is composed of two ATP-binding proteins (ModC), two transmembrane proteins (ModB) and a solute-binding protein (ModA).

The protein localises to the periplasm. In terms of biological role, part of the ABC transporter complex ModABC involved in the transport of molybdenum into the cell. Binds tungstate and molybdate. Can also bind chromate, with lower affinity. Plays an essential role in recruitment of molybdate for nitrate reduction. The sequence is that of Tungstate/molybdate/chromate-binding protein ModA from Pseudomonas aeruginosa (strain ATCC 15692 / DSM 22644 / CIP 104116 / JCM 14847 / LMG 12228 / 1C / PRS 101 / PAO1).